We begin with the raw amino-acid sequence, 609 residues long: MNSSYTQRYALPKCIAISDYLFHRLNQLNIHTIFGLSGEFSMPLLDKLYNIPNLRWAGNSNELNAAYAADGYSRLKGLGCLITTFGVGELSAINGVAGSYAEHVGILHIVGMPPTSAQTKQLLLHHTLGNGDFTVFHRIASDVACYTTLIIDSELCADEVDKCIKKAWIEQRPVYMGMPVNQVNLPIESARLNTPLDLQLHKNDPDVEKEVISRILSFIYKSQNPAIIVDACTSRQNLIEETKELCNRLKFPVFVTPMGKGTVNETDPQFGGVFTGSISAPEVREVVDFADFIIVIGCMLSEFSTSTFHFQYKTKNCALLYSTSVKLKNATYPDLSIKLLLQKILANLDESKLSYQPSEQPSMMVPRPYPAGNVLLRQEWVWNEISHWFQPGDIIITETGASAFGVNQTRFPVNTLGISQALWGSVGYTMGACLGAEFAVQEINKDKFPATKHRVILFMGDGAFQLTVQELSTIVKWGLTPYIFVMNNQGYSVDRFLHHRSDASYYDIQPWNYLGLLRVFGCTNYETKKIITVGEFRSMISDPNFATNDKIRMIEIMLPPRDVPQALLDRWVVEKEQSKQVQEENENSSAVNTPTPEFQPLLKKNQVGY.

A disordered region spans residues 578 to 598; it reads SKQVQEENENSSAVNTPTPEF.

It belongs to the TPP enzyme family. Mg(2+) is required as a cofactor. The cofactor is thiamine diphosphate.

The protein localises to the nucleus. The catalysed reaction is 4-methyl-2-oxopentanoate + H(+) = 3-methylbutanal + CO2. It carries out the reaction (S)-3-methyl-2-oxopentanoate + H(+) = 2-methylbutanal + CO2. It participates in amino-acid degradation; Ehrlich pathway. In terms of biological role, one of five 2-oxo acid decarboxylases (PDC1, PDC5, PDC6, ARO10, and THI3) involved in amino acid catabolism. The enzyme catalyzes the decarboxylation of amino acids, which, in a first step, have been transaminated to the corresponding 2-oxo acids (alpha-keto-acids). In a third step, the resulting aldehydes are reduced to alcohols, collectively referred to as fusel oils or alcohols. Its preferred substrates are the transaminated amino acids derived from leucine (4-methyl-2-oxopentanoate, also alpha-keto-isocaproate) and isoleucine ((3S)-3-methyl-2-oxopentanoate, also alpha-keto-beta-methylvalerate), whereas transaminated valine, transaminated aromatic amino acids, and pyruvate are no substrates. In analogy to the pyruvate decarboxylases the enzyme may in a side-reaction catalyze condensation (or carboligation) reactions leading to the formation of 2-hydroxy ketone, collectively called acyloins. The enzyme is also positively regulating the thiamine metabolism by a molecular mechanism that may involve thiamine concentration sensing and signal transmission. This is Thiamine metabolism regulatory protein THI3 (THI3) from Saccharomyces cerevisiae (strain ATCC 204508 / S288c) (Baker's yeast).